A 351-amino-acid chain; its full sequence is Probable minor fimbrial subunit LpfD (351 aa).

An N-terminal signal peptide occupies residues 1 to 22 (MKAAIALSLLGCVFGFSGKAFA).

It belongs to the fimbrial protein family.

It is found in the fimbrium. Part of the lpfABCC'DE fimbrial operon. LP fimbriae may participate in the interaction with eukaryotic cells by assisting in microcolony formation. This chain is Probable minor fimbrial subunit LpfD (lpfD), found in Escherichia coli O157:H7.